A 229-amino-acid chain; its full sequence is MGAAYFDQFKVVDLIAITNSSMMMMLAVAVALILLKGNRLIPNRWQAVMESIYDHFHGLVKDNSGPQYFPFVFTLFIFIVFLNILGLFPYVFTVTVHIVVTLGLSFSIVIGVTLGGLWKFKWNFLSILMPAGAPLALAPLLVLIETVSYISRAISLGVRLAANLSAGHLLFAILAGFGFNMLTTAGVFNIFPVLIMVFISLLEAAVAVIQAYVFSLLTTIYLADTIVLH.

6 helical membrane-spanning segments follow: residues 14–34, 68–88, 98–118, 124–144, 157–179, and 189–209; these read LIAI…ALIL, YFPF…LGLF, IVVT…GGLW, FLSI…LVLI, GVRL…GFGF, and NIFP…VAVI.

The protein belongs to the ATPase A chain family. In terms of assembly, F-type ATPases have 2 components, CF(1) - the catalytic core - and CF(0) - the membrane proton channel. CF(1) has five subunits: alpha(3), beta(3), gamma(1), delta(1), epsilon(1). CF(0) has three main subunits: a, b and c.

Its subcellular location is the mitochondrion inner membrane. In terms of biological role, mitochondrial membrane ATP synthase (F(1)F(0) ATP synthase or Complex V) produces ATP from ADP in the presence of a proton gradient across the membrane which is generated by electron transport complexes of the respiratory chain. F-type ATPases consist of two structural domains, F(1) - containing the extramembraneous catalytic core and F(0) - containing the membrane proton channel, linked together by a central stalk and a peripheral stalk. During catalysis, ATP synthesis in the catalytic domain of F(1) is coupled via a rotary mechanism of the central stalk subunits to proton translocation. Key component of the proton channel; it may play a direct role in the translocation of protons across the membrane. The protein is ATP synthase subunit a (ATPASE6) of Metridium senile (Brown sea anemone).